We begin with the raw amino-acid sequence, 275 residues long: HUWE1-associated protein modifying stress responses 1 (275 aa).

Over residues 32–44 (AEQDEQLPPELQE) the composition is skewed to acidic residues. The interval 32-51 (AEQDEQLPPELQEEAAAAAQ) is disordered. The segment at 80 to 152 (QQPGLSLWVP…LISFLCGKVP (73 aa)) is HUWE1-binding and HAPSTR1 oligomerization (HBO) domain. 3 disordered regions span residues 155–181 (RNSRAPPRLTVVSPNRATSTETSSSVE), 204–227 (SVRSSTPGSPTHVSSGSNASRRRN), and 250–275 (GTRKRTSAQCGDVITDSPTHKRNRMI). Phosphoserine is present on Ser167. The segment covering 172–181 (TSTETSSSVE) has biased composition (low complexity). Polar residues predominate over residues 204 to 216 (SVRSSTPGSPTHV). At Ser212 the chain carries Phosphoserine.

Belongs to the HAPSTR1 family. In terms of assembly, homooligomer. Heterooligomer with HAPSTR2; the interaction is direct and stabilizes HAPSTR1. Interacts with HUWE1. In terms of processing, ubiquitinated by HUWE1. Promotes HAPSTR1 degradation through polyubiquitination.

Its subcellular location is the nucleus. It is found in the cytoplasm. Acts as a central player within a network of stress response pathways promoting cellular adaptability. The E3 ligase HUWE1 assists HAPSTR1 in controlling stress signaling and in turn, HUWE1 feeds back to promote the degradation of HAPSTR1. HAPSTR1 represents a central coordination mechanism for stress response programs. Functions as a negative regulator of TP53/P53 in the cellular response to telomere erosion and probably also DNA damage. May attenuate p53/TP53 activation through the E3 ubiquitin ligase HUWE1. The sequence is that of HUWE1-associated protein modifying stress responses 1 from Homo sapiens (Human).